The following is a 496-amino-acid chain: Fusarielin biosynthesis cluster transcription factor FSL7 (496 aa).

Residues 16–46 (CDRCHELKIRCTRTGGTESRCDRCEKNDIDC) constitute a DNA-binding region (zn(2)-C6 fungal-type). Disordered stretches follow at residues 57 to 102 (PKSQ…SINS), 189 to 224 (RSIN…EDQM), 281 to 307 (ANHT…QSRS), 348 to 379 (GSTS…KPRT), and 444 to 470 (MTRE…AQAA). Polar residues-rich tracts occupy residues 65–89 (GPNT…QEQM) and 207–218 (ELQSTQSASGSP). The span at 281–294 (ANHTSSSSSSNSTT) shows a compositional bias: low complexity. Residues 355–379 (YNDTTAHPSSASLPSQTGGPTKPRT) are compositionally biased toward polar residues. Over residues 444–460 (MTREQHVSTGHGPDRHT) the composition is skewed to basic and acidic residues.

It is found in the nucleus. In terms of biological role, transcription regulator that specifically up-regulates the gene cluster that mediates the biosynthesis of fusarielins F, G and H, decaketide compounds with 5 methylations and a decaline core that act as mycoestrogens as they stimulate growth of MCF-7 breast cancer cells. Probably binds the 5'-CGGNNNCCG-3' motif present in the promoter of all the cluster genes. This is Fusarielin biosynthesis cluster transcription factor FSL7 from Gibberella zeae (strain ATCC MYA-4620 / CBS 123657 / FGSC 9075 / NRRL 31084 / PH-1) (Wheat head blight fungus).